Consider the following 205-residue polypeptide: Cbp/p300-interacting transactivator 3 (205 aa).

This sequence belongs to the CITED family.

The protein resides in the nucleus. Functionally, acts as a transcriptional coactivator. Enhances estrogen-dependent transactivation mediated by estrogen receptors. The protein is Cbp/p300-interacting transactivator 3 (CITED3) of Gallus gallus (Chicken).